The sequence spans 232 residues: 26S proteasome non-ATPase regulatory subunit 10 (232 aa).

ANK repeat units follow at residues 45-75, 79-108, 112-141, 144-173, 177-206, and 210-232; these read DERTPLHWAAAKGQISVAQYLMDNCKCSPNT, GGWTPLTSATSAGHTHMVKLLLEFGADPNT, SKRTPLHYASSKGRSDIVDLLLTHGAKNRK, TGSAPIHRASSNGSVATVERLLKGEANINS, EGDTPLHIAAEYNHEDVVECLLKHGADTTI, and DSKTPIDMSSSQTIKYLIKEFKK.

Acts as a chaperone during the assembly of the 26S proteasome, specifically of the 19S regulatory complex (RC). The sequence is that of 26S proteasome non-ATPase regulatory subunit 10 (psmD10) from Dictyostelium discoideum (Social amoeba).